Consider the following 95-residue polypeptide: DNA/RNA-binding protein Alba (95 aa).

Lys-13 is modified (N6-acetyllysine).

Belongs to the histone-like Alba family. In terms of processing, acetylated. Acetylation at Lys-13 decreases DNA-binding affinity.

The protein resides in the cytoplasm. It is found in the chromosome. Its function is as follows. Binds double-stranded DNA tightly but without sequence specificity. Involved in DNA compaction. The protein is DNA/RNA-binding protein Alba of Nitrosopumilus maritimus (strain SCM1).